A 676-amino-acid polypeptide reads, in one-letter code: ATP-dependent zinc metalloprotease FtsH (676 aa).

Residues 1 to 12 (MSFFDKIFKKFH) lie on the Cytoplasmic side of the membrane. Residues 13–33 (MGVLYFAVILIGATFIYCYFT) traverse the membrane as a helical segment. Residues 34–115 (KHEKKDNNTF…DPRPWNGYEH (82 aa)) are Extracellular-facing. Residues 116-136 (VFWVFRQCLTMLFFYCFFLFF) form a helical membrane-spanning segment. Over 137–676 (ADTIKQMGQE…EVLSTDSEQT (540 aa)) the chain is Cytoplasmic. 212–219 (GPPGTGKT) lines the ATP pocket. His433 provides a ligand contact to Zn(2+). Glu434 is a catalytic residue. Zn(2+)-binding residues include His437 and Asp509. The disordered stretch occupies residues 610–676 (EKEETNAPTQ…EVLSTDSEQT (67 aa)). The segment covering 615-636 (NAPTQTTSQMSSNNETTNTDKT) has biased composition (polar residues). Residues 650–667 (NQESNESNPNNNEKASPE) show a composition bias toward low complexity.

It in the central section; belongs to the AAA ATPase family. In the C-terminal section; belongs to the peptidase M41 family. As to quaternary structure, homohexamer. Zn(2+) is required as a cofactor.

Its subcellular location is the cell membrane. In terms of biological role, acts as a processive, ATP-dependent zinc metallopeptidase for both cytoplasmic and membrane proteins. Plays a role in the quality control of integral membrane proteins. This Aster yellows witches'-broom phytoplasma (strain AYWB) protein is ATP-dependent zinc metalloprotease FtsH.